The chain runs to 386 residues: Succinate--CoA ligase [ADP-forming] subunit beta (386 aa).

An ATP-grasp domain is found at 9 to 244 (KEILRSFGVP…LDEEDPAEVE (236 aa)). Residues K46, 53–55 (GRG), E99, A102, and E107 each bind ATP. The Mg(2+) site is built by N199 and D213. Residues N264 and 321 to 323 (GIM) contribute to the substrate site.

This sequence belongs to the succinate/malate CoA ligase beta subunit family. As to quaternary structure, heterotetramer of two alpha and two beta subunits. Mg(2+) is required as a cofactor.

It carries out the reaction succinate + ATP + CoA = succinyl-CoA + ADP + phosphate. It catalyses the reaction GTP + succinate + CoA = succinyl-CoA + GDP + phosphate. The protein operates within carbohydrate metabolism; tricarboxylic acid cycle; succinate from succinyl-CoA (ligase route): step 1/1. In terms of biological role, succinyl-CoA synthetase functions in the citric acid cycle (TCA), coupling the hydrolysis of succinyl-CoA to the synthesis of either ATP or GTP and thus represents the only step of substrate-level phosphorylation in the TCA. The beta subunit provides nucleotide specificity of the enzyme and binds the substrate succinate, while the binding sites for coenzyme A and phosphate are found in the alpha subunit. The chain is Succinate--CoA ligase [ADP-forming] subunit beta from Acidovorax ebreus (strain TPSY) (Diaphorobacter sp. (strain TPSY)).